The sequence spans 934 residues: Desmocollin 2-like protein (934 aa).

Cadherin domains lie at 167–274 (RWRP…APEF), 274–381 (FTGN…PPTF), 382–494 (KEKL…GPEF), and 495–600 (NPNI…IPVI). At 167-716 (RWRPLPFSVV…SASVSLGNYG (550 aa)) the chain is on the extracellular side. Residues Asn197, Asn296, and Asn316 are each glycosylated (N-linked (GlcNAc...) asparagine). Asn509, Asn565, and Asn569 each carry an N-linked (GlcNAc...) asparagine glycan. Residues 717–737 (ILALVLSGLLLLLLCLFLIFF) traverse the membrane as a helical segment. Over 738–934 (CTTKRDKLQI…ICYTTNKTGK (197 aa)) the chain is Cytoplasmic.

As to expression, expressed at low levels in the brain and heart.

The protein localises to the cell junction. The protein resides in the desmosome. Its subcellular location is the cell membrane. In terms of biological role, a component of desmosome cell-cell junctions which are required for positive regulation of cellular adhesion. Involved in the interaction of plaque proteins and intermediate filaments mediating cell-cell adhesion. Involved in the formation and structural organization of desmosome cell-cell junctions during embryonic development. Required for embryogenesis, specifically for progression of epiboly and normal convergence-extension movements during gastrulation. Required for the development of desmosomal-rich midlines in the heart. Plays an important role in ventricular contraction and resulting heart stroke volume. The protein is Desmocollin 2-like protein of Danio rerio (Zebrafish).